We begin with the raw amino-acid sequence, 964 residues long: uncharacterized protein (964 aa).

Disordered stretches follow at residues 1-31 and 169-199; these read MDSE…SDCE and EETY…DEIS. The span at 10–27 shows a compositional bias: polar residues; the sequence is HSICNSVSSGENYKSPES. A coiled-coil region spans residues 656–840; the sequence is EVMESLQVEI…LILNQTSMAK (185 aa).

This is an uncharacterized protein from Caenorhabditis elegans.